An 81-amino-acid chain; its full sequence is uncharacterized protein (81 aa).

2 helical membrane passes run 1–21 and 27–47; these read MTLFSFFLVILSFYYILFSLL and IFIYIKIIPTVSYFHFNHHFF.

The protein localises to the membrane. This is an uncharacterized protein from Saccharomyces cerevisiae (strain ATCC 204508 / S288c) (Baker's yeast).